The primary structure comprises 122 residues: Large ribosomal subunit protein bL12 (122 aa).

It belongs to the bacterial ribosomal protein bL12 family. Homodimer. Part of the ribosomal stalk of the 50S ribosomal subunit. Forms a multimeric L10(L12)X complex, where L10 forms an elongated spine to which 2 to 4 L12 dimers bind in a sequential fashion. Binds GTP-bound translation factors.

In terms of biological role, forms part of the ribosomal stalk which helps the ribosome interact with GTP-bound translation factors. Is thus essential for accurate translation. This chain is Large ribosomal subunit protein bL12, found in Bdellovibrio bacteriovorus (strain ATCC 15356 / DSM 50701 / NCIMB 9529 / HD100).